The sequence spans 2850 residues: Hornerin (2850 aa).

An S-100-like region spans residues 1–81; that stretch reads MPKLLQGVIT…TEYLLMIFKL (81 aa). EF-hand domains follow at residues 13 to 48 and 49 to 84; these read DVFY…LKNP and NDPD…LVQA. Ca(2+) contacts are provided by T27, E32, D62, D64, N66, K68, and E73. 13 repeat units span residues 97 to 187, 188 to 278, 279 to 369, 370 to 460, 474 to 566, 593 to 683, 685 to 747, 748 to 836, 839 to 875, 876 to 965, 966 to 1004, 1007 to 1097, and 1098 to 1188. Residues 100-110 are compositionally biased toward basic and acidic residues; the sequence is KLRDDTHQHQE. 2 disordered regions span residues 100-154 and 166-2817; these read KLRD…GTES and SGQH…KGGS. Polar residues predominate over residues 125–144; that stretch reads SSFSHSSWSAGENDSYSRNV. Low complexity-rich tracts occupy residues 167–192 and 226–248; these read GQHN…SSGR and GQSS…SQHG. Positions 249 to 259 are enriched in gly residues; sequence SGSGHSSGYGQ. Low complexity-rich tracts occupy residues 276-308 and 317-421; these read SSGS…QSPS and GHSS…SGSG. Residues 422 to 433 are compositionally biased toward gly residues; the sequence is QSPGHGQRGSGS. Composition is skewed to low complexity over residues 449 to 465 and 473 to 482; these read SSSS…SSGF and EHSSGYTQHG. The span at 483–493 shows a compositional bias: gly residues; the sequence is SGSGHSSGHGQ. 6 stretches are compositionally biased toward low complexity: residues 494–529, 555–661, 670–724, 732–765, 782–806, and 818–871; these read HGSR…QSLG, SSSY…QSPS, GHSS…SHSS, RSGQ…SSGH, GSSS…SCGH, and GQHE…GQHE. Phosphoserine occurs at positions 659 and 661. Residues 884 to 900 show a composition bias toward gly residues; the sequence is GSGSGQSPGHGQRGSGS. Residue S890 is modified to Phosphoserine. Low complexity-rich tracts occupy residues 901–921 and 931–996; these read GQSP…SSGR and GFGH…SLGH. Phosphoserine is present on residues S993 and S1008. Low complexity-rich tracts occupy residues 1019-1050 and 1057-1115; these read GQSS…SSGL and SGQS…SSGY. A compositionally biased stretch (gly residues) spans 1116–1132; the sequence is GRQGSGSGQSPGHGQRG. Low complexity-rich tracts occupy residues 1133–1156 and 1166–1184; these read SGSR…SSGQ and GFGH…SQHG. Over residues 1185-1195 the composition is skewed to gly residues; the sequence is SGSGHSSGYGQ. R1205 carries the omega-N-methylarginine modification. 2 stretches are compositionally biased toward low complexity: residues 1211 to 1232 and 1253 to 1276; these read SSSG…SSGH and GHSS…PYES. Repeat unit 14 spans residues 1215 to 1305; it reads SSSHYGQHGS…AYSQHGSGSG (91 aa). Polar residues predominate over residues 1280 to 1301; it reads HSSVFGQHESGSGHSSAYSQHG. 5 stretches are compositionally biased toward low complexity: residues 1309-1322, 1331-1349, 1370-1390, 1400-1438, and 1445-1466; these read SQGQ…QSST, GQSS…SSGY, GHSS…SSGR, GFGH…GQSS, and SSSG…SLGH. 16 repeat units span residues 1332 to 1422, 1423 to 1474, 1477 to 1567, 1568 to 1658, 1685 to 1775, 1802 to 1892, 1893 to 1944, 1947 to 2037, 2038 to 2128, 2155 to 2245, 2272 to 2362, 2363 to 2414, 2417 to 2507, 2508 to 2598, 2625 to 2715, and 2716 to 2806. S1463 and S1478 each carry phosphoserine. Composition is skewed to low complexity over residues 1489–1520 and 1527–1585; these read GQSS…SSGL and SGQS…SSGY. The span at 1586-1602 shows a compositional bias: gly residues; that stretch reads GRQGSGSGQSPGHGQRG. Low complexity-rich tracts occupy residues 1603–1626 and 1636–1654; these read SGSR…SSGQ and GFGH…SQHG. Residues 1655-1665 are compositionally biased toward gly residues; it reads SGSGHSSGYGQ. Low complexity predominate over residues 1682 to 1702; the sequence is SSRSSSRYGQHGSGSRQSSGH. Residues S1712 and S1714 each carry the phosphoserine modification. Low complexity predominate over residues 1723–1746; that stretch reads GHSSSHGQHGSGSGRSSSRGPYES. A compositionally biased stretch (polar residues) spans 1750–1771; the sequence is HSSVFGQHESGSGHSSAYSQHG. Composition is skewed to low complexity over residues 1779–1831, 1840–1860, and 1870–1936; these read SQGQ…QSPS, GHSS…SSGR, and GFGH…SLGH. Residues S1829 and S1831 each carry the phosphoserine modification. Residues S1933 and S1948 each carry the phosphoserine modification. Composition is skewed to low complexity over residues 1959–1990 and 1997–2055; these read GQSS…SSGL and SGQS…SSGY. The segment covering 2056–2072 has biased composition (gly residues); sequence GRQGSGSGQSPGHGQRG. Composition is skewed to low complexity over residues 2073-2096 and 2106-2124; these read SGSR…SSGQ and GFGH…SQHG. The segment covering 2125–2135 has biased composition (gly residues); the sequence is SGSGHSSGYGQ. Low complexity-rich tracts occupy residues 2151–2172 and 2193–2216; these read SSSG…SSGH and GHSS…PYES. The span at 2220–2241 shows a compositional bias: polar residues; the sequence is HSSVFGQHESGSGHSSAYSQHG. Low complexity-rich tracts occupy residues 2249–2301, 2310–2330, 2340–2378, and 2385–2406; these read SQGQ…QSPS, GHSS…SSGR, GFGH…GQSS, and SSSG…SLGH. S2299 and S2301 each carry phosphoserine. Phosphoserine is present on residues S2403 and S2418. Low complexity-rich tracts occupy residues 2429–2460 and 2467–2525; these read GQSS…SSGL and SGQS…SSGY. Gly residues predominate over residues 2526–2542; it reads GRQGSGSGQSPGHGQRG. Low complexity-rich tracts occupy residues 2543 to 2566 and 2576 to 2594; these read SGSR…SSGQ and GFGH…SQHG. Gly residues predominate over residues 2595–2605; sequence SGSGHSSGYGQ. A compositionally biased stretch (low complexity) spans 2621–2642; the sequence is SSSGSSSHYGQHGSGSRQSSGH. Phosphoserine occurs at positions 2652 and 2654. Over residues 2663-2682 the composition is skewed to low complexity; it reads GHSSSHGQHGSGSGRSSSRG. Polar residues predominate over residues 2698–2711; sequence ESGSGHSSAYSQHG. Low complexity-rich tracts occupy residues 2719-2732, 2741-2759, and 2795-2816; these read SQGQ…QSST, GQSS…SSGY, and SSGY…CKGG.

Belongs to the S100-fused protein family. The protein in the N-terminal section; belongs to the S-100 family. In terms of processing, processed during the process of epidermal differentiation. Post-translationally, forms covalent cross-links mediated by transglutaminase TGM3, between glutamine and the epsilon-amino group of lysine residues (in vitro). As to expression, expressed in cornified epidermis, psoriatic and regenerating skin after wounding. Found in the upper granular layer and in the entire cornified layer of epidermis.

It localises to the cytoplasmic granule. Component of the epidermal cornified cell envelopes. This Homo sapiens (Human) protein is Hornerin (HRNR).